A 134-amino-acid chain; its full sequence is Retinol-binding protein 2 (134 aa).

Residues K41 and Q109 each contribute to the all-trans-retinol site.

It belongs to the calycin superfamily. Fatty-acid binding protein (FABP) family.

Its subcellular location is the cytoplasm. Its function is as follows. Intracellular transport of retinol. This is Retinol-binding protein 2 (RBP2) from Sus scrofa (Pig).